The chain runs to 624 residues: Basal cell adhesion molecule (624 aa).

A signal peptide spans 1–25; that stretch reads MEPPDARAGLLWLTLLLSGYSGAQA. 2 consecutive Ig-like V-type domains span residues 26–136 and 141–251; these read ELHV…SSVR and PEAT…HTFR. The Extracellular segment spans residues 26–543; sequence ELHVSVPPRV…GSVAPQTAQA (518 aa). Disulfide bonds link Cys47/Cys119, Cys166/Cys231, and Cys285/Cys331. Ig-like C2-type domains lie at 268 to 343, 357 to 436, and 443 to 534; these read PSTT…EEVQ, PLEL…QSFQ, and PELK…FHFG. N-linked (GlcNAc...) asparagine glycosylation is found at Asn315, Asn371, and Asn378. Intrachain disulfides connect Cys379–Cys419 and Cys468–Cys518. Residues 477–497 are disordered; the sequence is KLTWSQRGDTTPAEPPFEGRG. Residues 544-564 traverse the membrane as a helical segment; the sequence is GVAVMAVAVSVGLLLLVVAAF. The Cytoplasmic portion of the chain corresponds to 565–624; sequence YCMRRKGRPGCCQRAEKGAPPAREPELSHSGSERPEHTGLLMGGPSGGGRGGNGGFGDEC. The disordered stretch occupies residues 574 to 624; that stretch reads GCCQRAEKGAPPAREPELSHSGSERPEHTGLLMGGPSGGGRGGNGGFGDEC. Residues 587 to 601 show a composition bias toward basic and acidic residues; the sequence is REPELSHSGSERPEH. 3 positions are modified to phosphoserine: Ser592, Ser594, and Ser596. A compositionally biased stretch (gly residues) spans 605–624; that stretch reads LMGGPSGGGRGGNGGFGDEC.

As to quaternary structure, homodimer. Interacts with ITGA4:ITGB1. Interacts with spectrins SPTA1 and SPTB1.

Its subcellular location is the cell membrane. Functionally, transmembrane glycoprotein that functions as both a receptor and an adhesion molecule playing a crucial role in cell adhesion, motility, migration and invasion. Extracellular domain enables binding to extracellular matrix proteins, such as laminin, integrin and other ligands while its intracellular domain interacts with cytoskeletal proteins like hemoglobin, facilitating cell signal transduction. Serves as a receptor for laminin alpha-5/LAMA5 to promote cell adhesion. Mechanistically, JAK2 induces BCAM phosphorylation and activates its adhesion to laminin by stimulating a Rap1/AKT signaling pathway in the absence of EPOR. This chain is Basal cell adhesion molecule (Bcam), found in Rattus norvegicus (Rat).